The sequence spans 384 residues: ATP synthase subunit a (384 aa).

The disordered stretch occupies residues 22 to 60 (PAPAAAPVEQHGAPAPEAAAPDAHAAPAGEHGAAVEAHA). 6 consecutive transmembrane segments (helical) span residues 131–151 (KHVMMMWFASALLLVVVLAAV), 189–209 (FVPYLVTAFFFILFLNLFGLI), 218–238 (NLSVTVALALFTFLITQYAAI), 258–278 (LAPLWIIMIPVEFLGLFTKPF), 293–313 (FVILALLGLIFALGTPWVAFG), and 319–339 (LGIFLLELFVAFVQAYIFTML). The segment at 355–384 (HGHAEEHGHAGPGMGSEHGSHVAGASPGHG) is disordered.

It belongs to the ATPase A chain family. In terms of assembly, F-type ATPases have 2 components, CF(1) - the catalytic core - and CF(0) - the membrane proton channel. CF(1) has five subunits: alpha(3), beta(3), gamma(1), delta(1), epsilon(1). CF(0) has three main subunits: a(1), b(2) and c(9-12). The alpha and beta chains form an alternating ring which encloses part of the gamma chain. CF(1) is attached to CF(0) by a central stalk formed by the gamma and epsilon chains, while a peripheral stalk is formed by the delta and b chains.

It localises to the cell inner membrane. Key component of the proton channel; it plays a direct role in the translocation of protons across the membrane. The polypeptide is ATP synthase subunit a (Anaeromyxobacter dehalogenans (strain 2CP-1 / ATCC BAA-258)).